An 80-amino-acid chain; its full sequence is Putative UPF0377 protein YMR324C (80 aa).

Residues 13 to 33 (ACIFIDSVCEGIVFWGLCLFV) form a helical membrane-spanning segment.

The protein belongs to the UPF0377 family.

The protein localises to the membrane. The polypeptide is Putative UPF0377 protein YMR324C (Saccharomyces cerevisiae (strain ATCC 204508 / S288c) (Baker's yeast)).